Here is a 132-residue protein sequence, read N- to C-terminus: Small ribosomal subunit protein uS8c (132 aa).

The protein belongs to the universal ribosomal protein uS8 family. Part of the 30S ribosomal subunit.

The protein resides in the plastid. The protein localises to the chloroplast. Functionally, one of the primary rRNA binding proteins, it binds directly to 16S rRNA central domain where it helps coordinate assembly of the platform of the 30S subunit. The sequence is that of Small ribosomal subunit protein uS8c (rps8) from Zygnema circumcarinatum (Green alga).